Consider the following 527-residue polypeptide: ARS-binding protein 2 (527 aa).

Disordered stretches follow at residues 160–184, 219–265, and 282–344; these read PDVN…HSAS, SHHM…NSHN, and IDPD…IKRL. Positions 164–177 are enriched in low complexity; it reads SSSISTMRTSTSPS. Over residues 225–239 the composition is skewed to polar residues; that stretch reads RGSQQAHQTTPQNHS. The segment covering 284–303 has biased composition (basic and acidic residues); it reads PDWHQWPDDLRDVSSPKESD. 3 positions are modified to phosphoserine: Ser-297, Ser-298, and Ser-302. Residues 328 to 343 are compositionally biased toward basic residues; sequence PRKRGRPPGARNKIKR.

Its subcellular location is the nucleus. Binds, preferentially, to the Maundrell ARS consensus sequence within ARS3002. The sequence is that of ARS-binding protein 2 (abp2) from Schizosaccharomyces pombe (strain 972 / ATCC 24843) (Fission yeast).